Consider the following 359-residue polypeptide: Pyruvate dehydrogenase E1 component subunit beta, mitochondrial (359 aa).

The N-terminal 30 residues, 1–30 (MAAVSGLVRRPLREVSRLLKRRFHWTAPAA), are a transit peptide targeting the mitochondrion. At Tyr67 the chain carries Phosphotyrosine. Glu89 contacts thiamine diphosphate. Ile142, Ala190, Ile191, Asp193, and Asn195 together coordinate K(+). Lys354 is subject to N6-acetyllysine.

In terms of assembly, heterotetramer of two PDHA1 and two PDHB subunits. The heterotetramer interacts with DLAT, and is part of the multimeric pyruvate dehydrogenase complex that contains multiple copies of pyruvate dehydrogenase (E1), dihydrolipoamide acetyltransferase (DLAT, E2) and lipoamide dehydrogenase (DLD, E3). These subunits are bound to an inner core composed of about 48 DLAT and 12 PDHX molecules. Interacts with DLAT. Thiamine diphosphate is required as a cofactor.

It localises to the mitochondrion matrix. It carries out the reaction N(6)-[(R)-lipoyl]-L-lysyl-[protein] + pyruvate + H(+) = N(6)-[(R)-S(8)-acetyldihydrolipoyl]-L-lysyl-[protein] + CO2. In terms of biological role, the pyruvate dehydrogenase complex catalyzes the overall conversion of pyruvate to acetyl-CoA and CO(2), and thereby links the glycolytic pathway to the tricarboxylic cycle. The polypeptide is Pyruvate dehydrogenase E1 component subunit beta, mitochondrial (PDHB) (Pongo abelii (Sumatran orangutan)).